The primary structure comprises 223 residues: MKQEKTVSATLVNNPALTGRGTCCDDDECLNDPAQLPAEIMESMSESVYTLLEGVGEDPEREGLLKTPERVARSLAFLTRGYRQDPEEMLKKAVFTESYDEMVLVKDIDIFSMCEHHMLPFFGKAHVAYIPDGKIVGLSKLARVVEVFARRLQVQERLTQQIRDAIQDVLHPKGVGVVIEAKHMCMVMRGVEKLNSVTTTSAMSGEFISSESTRGEFLRLIRP.

Positions 114, 117, and 185 each coordinate Zn(2+).

Belongs to the GTP cyclohydrolase I family. In terms of assembly, homomer.

The enzyme catalyses GTP + H2O = 7,8-dihydroneopterin 3'-triphosphate + formate + H(+). It functions in the pathway cofactor biosynthesis; 7,8-dihydroneopterin triphosphate biosynthesis; 7,8-dihydroneopterin triphosphate from GTP: step 1/1. The protein is GTP cyclohydrolase 1 of Chlorobium phaeovibrioides (strain DSM 265 / 1930) (Prosthecochloris vibrioformis (strain DSM 265)).